Here is a 637-residue protein sequence, read N- to C-terminus: Biosynthetic arginine decarboxylase (637 aa).

An N6-(pyridoxal phosphate)lysine modification is found at K101. 286-296 (FDVGGGLAVDY) lines the substrate pocket.

The protein belongs to the Orn/Lys/Arg decarboxylase class-II family. SpeA subfamily. Mg(2+) serves as cofactor. The cofactor is pyridoxal 5'-phosphate.

The enzyme catalyses L-arginine + H(+) = agmatine + CO2. It functions in the pathway amine and polyamine biosynthesis; agmatine biosynthesis; agmatine from L-arginine: step 1/1. Its function is as follows. Catalyzes the biosynthesis of agmatine from arginine. This Shewanella sp. (strain ANA-3) protein is Biosynthetic arginine decarboxylase.